The sequence spans 273 residues: Shikimate dehydrogenase (NADP(+)) (273 aa).

Shikimate-binding positions include 14–16 and Thr61; that span reads SKS. The active-site Proton acceptor is Lys65. Residues Asn86 and Asp102 each contribute to the shikimate site. NADP(+) is bound by residues 126–130, 150–155, and Met213; these read GAGGA and NRTHAR. Tyr215 lines the shikimate pocket. Gly237 provides a ligand contact to NADP(+).

Belongs to the shikimate dehydrogenase family. As to quaternary structure, homodimer.

It catalyses the reaction shikimate + NADP(+) = 3-dehydroshikimate + NADPH + H(+). Its pathway is metabolic intermediate biosynthesis; chorismate biosynthesis; chorismate from D-erythrose 4-phosphate and phosphoenolpyruvate: step 4/7. Functionally, involved in the biosynthesis of the chorismate, which leads to the biosynthesis of aromatic amino acids. Catalyzes the reversible NADPH linked reduction of 3-dehydroshikimate (DHSA) to yield shikimate (SA). The protein is Shikimate dehydrogenase (NADP(+)) of Aeromonas hydrophila subsp. hydrophila (strain ATCC 7966 / DSM 30187 / BCRC 13018 / CCUG 14551 / JCM 1027 / KCTC 2358 / NCIMB 9240 / NCTC 8049).